Reading from the N-terminus, the 427-residue chain is Indole diterpene prenyltransferase idtF (427 aa).

Substrate-binding residues include Arg-97, Lys-195, Arg-264, Lys-266, Tyr-268, and Tyr-352.

This sequence belongs to the tryptophan dimethylallyltransferase family.

Its pathway is secondary metabolite biosynthesis. Indole diterpene prenyltransferase; part of the gene cluster that mediates the biosynthesis of paspalitrems, indole-diterpene (IDT) mycotoxins that are potent tremorgens in mammals. The geranylgeranyl diphosphate (GGPP) synthase idtG is proposed to catalyze the first step in IDT biosynthesis via catalysis of a series of iterative condensations of isopentenyl diphosphate (IPP) with dimethylallyl diphosphate (DMAPP), geranyl diphosphate (GPP), and farnesyl diphosphate (FPP), to form GGPP. Condensation of indole-3-glycerol phosphate with GGPP by the prenyltransferase idtC then forms 3-geranylgeranylindole (3-GGI). Epoxidation of the two terminal alkenes of the geranylgeranyl moiety by the FAD-dependent monooxygenase idtM, and cyclization by the terpene cyclase idtB then leads to the production of paspaline. The cytochrome P450 monooxygenase idtP then catalyzes oxidative elimination of the pendant methyl group at C-12 of paspaline and generates the C-10 ketone to yield 13-desoxypaxilline. The cytochrome P450 monooxygenase idtQ may catalyze the C-13 oxidation of 13-desoxypaxilline to afford paxilline. Considering that both paspalicine and paxilline were detected in C.paspali, idtQ also catalyzes the formation of paspalinine from 13-desoxypaxilline via paspalicine as an intermediate. Finally, the alpha-prenyltransferase idtF prenylates paspalinine at the C-20 or the C-21 positions to yield paspalitrems A and C, respectively. The hydroxylation of paspalitrem A at C-32 by a still unknown oxidase affords paspalitrem B. The sequence is that of Indole diterpene prenyltransferase idtF from Claviceps paspali (Rye ergot fungus).